The following is a 417-amino-acid chain: S-adenosylmethionine synthase (417 aa).

ATP is bound at residue His-16. A Mg(2+)-binding site is contributed by Asp-18. Glu-44 contacts K(+). Positions 57 and 100 each coordinate L-methionine. The tract at residues 100-110 (QSPDIAQGVTS) is flexible loop. ATP-binding positions include 175 to 177 (DGK), 251 to 252 (KF), Asp-260, 266 to 267 (RK), Ala-283, and Lys-287. Asp-260 provides a ligand contact to L-methionine. Residue Lys-291 coordinates L-methionine.

It belongs to the AdoMet synthase family. In terms of assembly, homotetramer; dimer of dimers. Mg(2+) serves as cofactor. K(+) is required as a cofactor.

It localises to the cytoplasm. It carries out the reaction L-methionine + ATP + H2O = S-adenosyl-L-methionine + phosphate + diphosphate. It participates in amino-acid biosynthesis; S-adenosyl-L-methionine biosynthesis; S-adenosyl-L-methionine from L-methionine: step 1/1. Functionally, catalyzes the formation of S-adenosylmethionine (AdoMet) from methionine and ATP. The overall synthetic reaction is composed of two sequential steps, AdoMet formation and the subsequent tripolyphosphate hydrolysis which occurs prior to release of AdoMet from the enzyme. This is S-adenosylmethionine synthase from Picosynechococcus sp. (strain ATCC 27264 / PCC 7002 / PR-6) (Agmenellum quadruplicatum).